Consider the following 829-residue polypeptide: Leucine--tRNA ligase (829 aa).

Residues 40–50 carry the 'HIGH' region motif; the sequence is PYPSGNIHMGH. The short motif at 594-598 is the 'KMSKS' region element; that stretch reads KMSKS. K597 provides a ligand contact to ATP.

The protein belongs to the class-I aminoacyl-tRNA synthetase family.

The protein localises to the cytoplasm. It catalyses the reaction tRNA(Leu) + L-leucine + ATP = L-leucyl-tRNA(Leu) + AMP + diphosphate. The sequence is that of Leucine--tRNA ligase from Anaplasma marginale (strain St. Maries).